Reading from the N-terminus, the 116-residue chain is Nitrogenase iron-iron protein delta chain (116 aa).

Hexamer of two alpha, two beta, and two delta chains. Requires iron-sulfur cluster as cofactor.

The catalysed reaction is N2 + 8 reduced [2Fe-2S]-[ferredoxin] + 16 ATP + 16 H2O = H2 + 8 oxidized [2Fe-2S]-[ferredoxin] + 2 NH4(+) + 16 ADP + 16 phosphate + 6 H(+). Its function is as follows. The key enzymatic reactions in nitrogen fixation are catalyzed by the nitrogenase complex, which has 2 components: the iron protein (component 2) and a component 1 which is either a molybdenum-iron protein, a vanadium-iron, or an iron-iron protein. In Rhodospirillum rubrum, this protein is Nitrogenase iron-iron protein delta chain (anfG).